Reading from the N-terminus, the 636-residue chain is Biosynthetic arginine decarboxylase (636 aa).

K101 bears the N6-(pyridoxal phosphate)lysine mark. A substrate-binding site is contributed by 286 to 296; the sequence is FDVGGGLAVDY.

Belongs to the Orn/Lys/Arg decarboxylase class-II family. SpeA subfamily. The cofactor is Mg(2+). Pyridoxal 5'-phosphate is required as a cofactor.

It carries out the reaction L-arginine + H(+) = agmatine + CO2. It functions in the pathway amine and polyamine biosynthesis; agmatine biosynthesis; agmatine from L-arginine: step 1/1. Functionally, catalyzes the biosynthesis of agmatine from arginine. This chain is Biosynthetic arginine decarboxylase, found in Shewanella amazonensis (strain ATCC BAA-1098 / SB2B).